Here is a 141-residue protein sequence, read N- to C-terminus: Large ribosomal subunit protein bL17 (141 aa).

The protein belongs to the bacterial ribosomal protein bL17 family. Part of the 50S ribosomal subunit. Contacts protein L32.

The sequence is that of Large ribosomal subunit protein bL17 from Bartonella bacilliformis (strain ATCC 35685 / KC583 / Herrer 020/F12,63).